The following is a 421-amino-acid chain: Alpha-1-antitrypsin (421 aa).

The N-terminal stretch at 1-24 is a signal peptide; it reads MASSSTWGLLLLAGLCCLVPISLA. N-linked (GlcNAc...) asparagine glycans are attached at residues N73 and N110. Residues 376-395 are RCL; it reads GATILEAIPMSIPPNVKFNK. At S386 the chain carries Phosphoserine.

Belongs to the serpin family. In terms of assembly, interacts with CELA2A. Interacts with ERGIC3 and LMAN1/ERGIC53. Interacts with PRSS1/Trypsin.

The protein localises to the secreted. Inhibitor of serine proteases. Its primary target is elastase, but it also has a moderate affinity for plasmin and thrombin. This chain is Alpha-1-antitrypsin (SERPINA1), found in Sus scrofa (Pig).